Consider the following 499-residue polypeptide: Bifunctional NAD(P)H-hydrate repair enzyme Nnr (499 aa).

An NAD(P)H-hydrate epimerase region spans residues 1–217 (MFITSKEMRR…PEIAERICGP (217 aa)). Residues 8–213 (MRRIELNSRW…NAGIPEIAER (206 aa)) form the YjeF N-terminal domain. An NADPHX 1; for epimerase activity region spans residues 54–58 (GNGGD). Residues Asn55 and Asp124 each coordinate K(+). The NADPHX 1; for epimerase activity stretch occupies residues 128-134 (GFGIRGR). Asp160 contributes to the (6S)-NADPHX binding site. Thr163 is a K(+) binding site. The YjeF C-terminal domain occupies 217–485 (PGDLITSDIW…EYVPKVLRNP (269 aa)). The ADP-dependent (S)-NAD(P)H-hydrate dehydratase stretch occupies residues 217–499 (PGDLITSDIW…PEAVTEVRRD (283 aa)). Gly314 serves as a coordination point for (6S)-NADPHX. Residues 360-366 (HAGEFRR) form an NADPHX 2; for dehydratase activity region. Residues 397–401 (KGRVD) and 417–426 (TPAMTVGGTG) contribute to the ADP site. (6S)-NADPHX is bound at residue Asp427.

The protein in the N-terminal section; belongs to the NnrE/AIBP family. This sequence in the C-terminal section; belongs to the NnrD/CARKD family. It depends on K(+) as a cofactor.

It carries out the reaction (6S)-NADHX + ADP = AMP + phosphate + NADH + H(+). It catalyses the reaction (6S)-NADPHX + ADP = AMP + phosphate + NADPH + H(+). The catalysed reaction is (6R)-NADHX = (6S)-NADHX. The enzyme catalyses (6R)-NADPHX = (6S)-NADPHX. Bifunctional enzyme that catalyzes the epimerization of the S- and R-forms of NAD(P)HX and the dehydration of the S-form of NAD(P)HX at the expense of ADP, which is converted to AMP. This allows the repair of both epimers of NAD(P)HX, a damaged form of NAD(P)H that is a result of enzymatic or heat-dependent hydration. This Methanopyrus kandleri (strain AV19 / DSM 6324 / JCM 9639 / NBRC 100938) protein is Bifunctional NAD(P)H-hydrate repair enzyme Nnr (nnr).